The primary structure comprises 271 residues: 3-methyl-2-oxobutanoate hydroxymethyltransferase (271 aa).

Mg(2+) contacts are provided by aspartate 53 and aspartate 92. Residues 53–54 (DS), aspartate 92, and lysine 120 each bind 3-methyl-2-oxobutanoate. Glutamate 122 contributes to the Mg(2+) binding site. Glutamate 189 acts as the Proton acceptor in catalysis.

Belongs to the PanB family. As to quaternary structure, homodecamer; pentamer of dimers. It depends on Mg(2+) as a cofactor.

It localises to the cytoplasm. It carries out the reaction 3-methyl-2-oxobutanoate + (6R)-5,10-methylene-5,6,7,8-tetrahydrofolate + H2O = 2-dehydropantoate + (6S)-5,6,7,8-tetrahydrofolate. It functions in the pathway cofactor biosynthesis; (R)-pantothenate biosynthesis; (R)-pantoate from 3-methyl-2-oxobutanoate: step 1/2. Its function is as follows. Catalyzes the reversible reaction in which hydroxymethyl group from 5,10-methylenetetrahydrofolate is transferred onto alpha-ketoisovalerate to form ketopantoate. This Burkholderia mallei (strain NCTC 10247) protein is 3-methyl-2-oxobutanoate hydroxymethyltransferase.